Consider the following 151-residue polypeptide: Chaperonin GroEL (151 aa).

Residue 41–45 (DGTTT) participates in ATP binding.

Belongs to the chaperonin (HSP60) family. As to quaternary structure, forms a cylinder of 14 subunits composed of two heptameric rings stacked back-to-back. Interacts with the co-chaperonin GroES.

Its subcellular location is the cytoplasm. It carries out the reaction ATP + H2O + a folded polypeptide = ADP + phosphate + an unfolded polypeptide.. Its function is as follows. Together with its co-chaperonin GroES, plays an essential role in assisting protein folding. The GroEL-GroES system forms a nano-cage that allows encapsulation of the non-native substrate proteins and provides a physical environment optimized to promote and accelerate protein folding. This chain is Chaperonin GroEL, found in Mycobacteroides chelonae (Mycobacterium chelonae).